The sequence spans 347 residues: 2-hydroxyacid dehydrogenase A (347 aa).

NAD(+) is bound by residues 157 to 158 (RI), Asp-177, 234 to 236 (TSR), and Asp-260. Residue Arg-236 is part of the active site. Glu-265 is an active-site residue.

Belongs to the D-isomer specific 2-hydroxyacid dehydrogenase family.

The catalysed reaction is a (2R)-2-hydroxycarboxylate + NADP(+) = a 2-oxocarboxylate + NADPH + H(+). Functionally, 2-hydroxyacid dehydrogenase that is capable to reduce pyruvate, hydroxypyruvate and glyoxylate in a NADPH- or NADH-dependent manner. In contrast to 2-HadhD/morA, does not recognize 4-methyl-2-oxopentanoate (MOA) as a substrate. This Aspergillus oryzae (strain ATCC 42149 / RIB 40) (Yellow koji mold) protein is 2-hydroxyacid dehydrogenase A.